Consider the following 437-residue polypeptide: Enolase (437 aa).

(2R)-2-phosphoglycerate is bound at residue Gln-166. Residue Glu-208 is the Proton donor of the active site. Mg(2+)-binding residues include Asp-245, Glu-295, and Asp-322. Residues Lys-347, Arg-376, Ser-377, and Lys-398 each contribute to the (2R)-2-phosphoglycerate site. Catalysis depends on Lys-347, which acts as the Proton acceptor.

The protein belongs to the enolase family. The cofactor is Mg(2+).

The protein resides in the cytoplasm. It localises to the secreted. Its subcellular location is the cell surface. The enzyme catalyses (2R)-2-phosphoglycerate = phosphoenolpyruvate + H2O. It participates in carbohydrate degradation; glycolysis; pyruvate from D-glyceraldehyde 3-phosphate: step 4/5. Functionally, catalyzes the reversible conversion of 2-phosphoglycerate (2-PG) into phosphoenolpyruvate (PEP). It is essential for the degradation of carbohydrates via glycolysis. In Lachnoclostridium phytofermentans (strain ATCC 700394 / DSM 18823 / ISDg) (Clostridium phytofermentans), this protein is Enolase.